A 375-amino-acid chain; its full sequence is tRNA-specific 2-thiouridylase MnmA (375 aa).

ATP-binding positions include 16–23 (GMSGGVDS) and M42. The interaction with target base in tRNA stretch occupies residues 102-104 (NPD). The active-site Nucleophile is the C107. C107 and C203 are joined by a disulfide. ATP is bound at residue G131. Positions 153 to 155 (KDQ) are interaction with tRNA. Residue C203 is the Cysteine persulfide intermediate of the active site. The tract at residues 315–316 (RY) is interaction with tRNA.

The protein belongs to the MnmA/TRMU family.

The protein localises to the cytoplasm. The catalysed reaction is S-sulfanyl-L-cysteinyl-[protein] + uridine(34) in tRNA + AH2 + ATP = 2-thiouridine(34) in tRNA + L-cysteinyl-[protein] + A + AMP + diphosphate + H(+). Catalyzes the 2-thiolation of uridine at the wobble position (U34) of tRNA, leading to the formation of s(2)U34. The protein is tRNA-specific 2-thiouridylase MnmA of Pseudomonas paraeruginosa (strain DSM 24068 / PA7) (Pseudomonas aeruginosa (strain PA7)).